A 466-amino-acid chain; its full sequence is MSSLTRLTLAQVAQKLKAREVSAVEVLDACLTQVRSTEKQISAYVCVLEDQARAAAHATDADIRGRWKGPLHGVPVAVKDLYDIAGVPTTASSPAHELDAQQDPARVRRLQDAGAVILGKTHTHEFAYGRITPKSRNPRDPGRTPGGSSGGSAATVAACCVYLATGTDTGGSVRIPSSMCNTVGLKQPTVGRVHGAGVSSLSWSLDHPGPITRTVEDTALMLQVMAGFDPADPRSLDEPVPSYAEGLGQGVKGLRWGVPKNYFFDRVDPEVESAVRAAIDQLKELGAELVEVEVPMAEQIIPVKFGIMLPEASAYHRTMLRESPELYTADVRILLELGDLVTATDYLQAQRVRTLMQRAVAEMYQRIDVLIAPTLPIPAARSGEEVHTWPDGTVEALVMAYTRFTSFGNVTGLPTLNLPCGFSKDGLRSACRSGRPLDEKTLLRAGLAYEKATTWHQRHPELIGAG.

Active-site charge relay system residues include lysine 79 and serine 148. A disordered region spans residues tyrosine 128 to serine 152. The Acyl-ester intermediate role is filled by serine 172.

Belongs to the amidase family.

The catalysed reaction is a monocarboxylic acid amide + H2O = a monocarboxylate + NH4(+). The protein is Amidase of Pseudomonas putida (Arthrobacter siderocapsulatus).